A 400-amino-acid polypeptide reads, in one-letter code: Nicotinate phosphoribosyltransferase (400 aa).

Phosphohistidine; by autocatalysis is present on H220.

It belongs to the NAPRTase family. In terms of processing, transiently phosphorylated on a His residue during the reaction cycle. Phosphorylation strongly increases the affinity for substrates and increases the rate of nicotinate D-ribonucleotide production. Dephosphorylation regenerates the low-affinity form of the enzyme, leading to product release.

It catalyses the reaction nicotinate + 5-phospho-alpha-D-ribose 1-diphosphate + ATP + H2O = nicotinate beta-D-ribonucleotide + ADP + phosphate + diphosphate. It participates in cofactor biosynthesis; NAD(+) biosynthesis; nicotinate D-ribonucleotide from nicotinate: step 1/1. Functionally, catalyzes the synthesis of beta-nicotinate D-ribonucleotide from nicotinate and 5-phospho-D-ribose 1-phosphate at the expense of ATP. The protein is Nicotinate phosphoribosyltransferase of Escherichia coli O127:H6 (strain E2348/69 / EPEC).